The following is a 194-amino-acid chain: Fe/S biogenesis protein NfuA (194 aa).

Cysteine 152 and cysteine 155 together coordinate [4Fe-4S] cluster.

Belongs to the NfuA family. In terms of assembly, homodimer. [4Fe-4S] cluster is required as a cofactor.

Its function is as follows. Involved in iron-sulfur cluster biogenesis. Binds a 4Fe-4S cluster, can transfer this cluster to apoproteins, and thereby intervenes in the maturation of Fe/S proteins. Could also act as a scaffold/chaperone for damaged Fe/S proteins. In Ectopseudomonas mendocina (strain ymp) (Pseudomonas mendocina), this protein is Fe/S biogenesis protein NfuA.